A 565-amino-acid polypeptide reads, in one-letter code: NAD-dependent malic enzyme (565 aa).

The Proton donor role is filled by Tyr-104. Arg-157 provides a ligand contact to NAD(+). Residue Lys-175 is the Proton acceptor of the active site. Positions 246, 247, and 270 each coordinate a divalent metal cation. 2 residues coordinate NAD(+): Asp-270 and Asn-418.

The protein belongs to the malic enzymes family. Homotetramer. Mg(2+) is required as a cofactor. It depends on Mn(2+) as a cofactor.

It catalyses the reaction (S)-malate + NAD(+) = pyruvate + CO2 + NADH. The catalysed reaction is oxaloacetate + H(+) = pyruvate + CO2. This is NAD-dependent malic enzyme from Salmonella agona (strain SL483).